The sequence spans 156 residues: Ribosomal RNA large subunit methyltransferase H (156 aa).

Residues Leu-73, Gly-104, and 123–128 (ISSMTL) each bind S-adenosyl-L-methionine.

This sequence belongs to the RNA methyltransferase RlmH family. In terms of assembly, homodimer.

It is found in the cytoplasm. It carries out the reaction pseudouridine(1915) in 23S rRNA + S-adenosyl-L-methionine = N(3)-methylpseudouridine(1915) in 23S rRNA + S-adenosyl-L-homocysteine + H(+). Its function is as follows. Specifically methylates the pseudouridine at position 1915 (m3Psi1915) in 23S rRNA. The sequence is that of Ribosomal RNA large subunit methyltransferase H from Burkholderia vietnamiensis (strain G4 / LMG 22486) (Burkholderia cepacia (strain R1808)).